Reading from the N-terminus, the 243-residue chain is Anti-H(O) lectin 2 (243 aa).

Residue asparagine 115 is glycosylated (N-linked (GlcNAc...) asparagine). Mn(2+) contacts are provided by glutamate 127 and aspartate 129. Ca(2+)-binding residues include aspartate 129, asparagine 136, and aspartate 139. The Mn(2+) site is built by aspartate 139 and histidine 144.

The protein belongs to the leguminous lectin family. As to quaternary structure, homodimer.

Functionally, lactose- or galactose-binding anti-H(O) lectin. The polypeptide is Anti-H(O) lectin 2 (Cytisophyllum sessilifolium (Sessile-leaved cytisus)).